We begin with the raw amino-acid sequence, 339 residues long: Serpentine receptor class r-10 (339 aa).

The Extracellular portion of the chain corresponds to 1-11 (MSGELWITLVD). A helical transmembrane segment spans residues 12-32 (TADIVGVTLTFCVNIVLLGLL). The Cytoplasmic portion of the chain corresponds to 33-42 (KTRGKNLGTY). Residues 43–63 (KYLMAFFSVFSIFYAIIEFIL) form a helical membrane-spanning segment. Residues 64–92 (RPIMHIENTTFFLISRKRFNYSTKLGKIN) are Extracellular-facing. N-linked (GlcNAc...) asparagine glycans are attached at residues N71 and N83. A helical membrane pass occupies residues 93–113 (SAFYCACFATSFVVSGVHFVY). Residues 114 to 131 (RYFATCKPNLLRLFNLPT) are Cytoplasmic-facing. A helical membrane pass occupies residues 132–152 (LLLWPLGCSVPVTMWASVSYF). The Extracellular portion of the chain corresponds to 153 to 201 (LYPDTEYTEAAVTNVLNNHYNWIKKENVSYIAYVYYQYENGVRHIYLKN). N-linked (GlcNAc...) asparagine glycosylation is present at N179. Residues 202–222 (LLGCFVHYFVMSMTFVVMFYC) traverse the membrane as a helical segment. At 223-254 (GYATWKTMNEHKDVSDRTRALQKQLFKALVLQ) the chain is on the cytoplasmic side. The helical transmembrane segment at 255-275 (TLIPTIFMYAPTGVMFIAPFF) threads the bilayer. Topologically, residues 276–284 (DVNLNANAN) are extracellular. Residues 285–305 (FIVFCSFLYPGLDPLILILII) traverse the membrane as a helical segment. Over 306-339 (RDFRRTIFNFLCGKKNSVDESRSTTRANLSQVPT) the chain is Cytoplasmic.

It belongs to the nematode receptor-like protein str family. In terms of assembly, interacts with odr-4. Strongly expressed in the sensory cilia of AWA olfactory neurons, and at low levels in the CEP neurons.

It is found in the cell projection. Its subcellular location is the cilium membrane. In terms of biological role, an odorant receptor which affects chemotaxis to the volatile odorant diacetyl. Specifies AWA neuronal cell fate via the odr-7 pathway. In Caenorhabditis elegans, this protein is Serpentine receptor class r-10.